The sequence spans 517 residues: Nuclear receptor subfamily 5 group A member 2 (517 aa).

A DNA-binding region (nuclear receptor) is located at residues 43–118 (DEMCPVCGDK…VGMKLEAVRA (76 aa)). 8 residues coordinate Zn(2+): cysteine 46, cysteine 49, cysteine 63, cysteine 66, cysteine 82, cysteine 88, cysteine 98, and cysteine 101. NR C4-type zinc fingers lie at residues 46–66 (CPVCGDKVSGYHYGLLTCESC) and 82–101 (CIENQSCQIDKTQRKRCPYC). The tract at residues 112–127 (KLEAVRADRMRGGRNK) is C-terminal extension (CTE). An FTZ-F1 box motif is present at residues 128 to 147 (FGPMYKRDRALKQQKKALIR). The interval 182-211 (GLPLSHHHHHHHHHHHHSSSSAGLPPADFD) is disordered. The segment covering 186-199 (SHHHHHHHHHHHHS) has biased composition (basic residues). An NR LBD domain is found at 276–515 (SFPHLVVELL…NLLIEMLHAK (240 aa)). Residues 397–400 (GATL), tyrosine 492, and lysine 496 contribute to the a phospholipid derivative site. Residues 504–515 (CNNLLIEMLHAK) form an AF-2 region.

It belongs to the nuclear hormone receptor family. NR5 subfamily. In terms of assembly, monomer; Binds DNA as a monomer.

The protein localises to the nucleus. The protein resides in the chromosome. In terms of biological role, orphan nuclear receptor that binds DNA as a monomer to the 5'-TCAAGGCCA-3' sequence and controls expression of target genes: regulates key biological processes, such as cholesterol and bile acid synthesis pathways, as well as cartilage, liver and pancreas morphogenesis. Ligand-binding causes conformational change which causes recruitment of coactivators, promoting target gene activation. The specific ligand is unknown, but specific phospholipids, such as phosphatidylethanolamine, phosphatidylserine, dilauroyl phosphatidylcholine and diundecanoyl phosphatidylcholine can act as ligand in vitro. Acts as a pioneer transcription factor, which unwraps target DNA from histones and elicits local opening of closed chromatin. Involved in the formation of connective tissue in lower jaw. Functionally, lacks transcription factor activity; unable to activate expression of target genes. The protein is Nuclear receptor subfamily 5 group A member 2 of Danio rerio (Zebrafish).